We begin with the raw amino-acid sequence, 84 residues long: MNAQFDDATKTLDTLGLRCPEPVMLVRKTIRNMAQGETLLVIADDPATVRDIPGFCRFMEHDLLQQETQATPYRYLIRKKEGQL.

The active-site Cysteine persulfide intermediate is C19.

It belongs to the sulfur carrier protein TusA family. In terms of assembly, interacts with IscS.

The protein localises to the cytoplasm. The protein operates within tRNA modification. Its function is as follows. Sulfur carrier protein involved in sulfur trafficking in the cell. Part of a sulfur-relay system required for 2-thiolation during synthesis of 2-thiouridine of the modified wobble base 5-methylaminomethyl-2-thiouridine (mnm(5)s(2)U) in tRNA. Interacts with IscS and stimulates its cysteine desulfurase activity. Accepts an activated sulfur from IscS, which is then transferred to TusD, and thus determines the direction of sulfur flow from IscS to 2-thiouridine formation. Also appears to be involved in sulfur transfer for the biosynthesis of molybdopterin. This chain is Sulfur carrier protein TusA, found in Proteus mirabilis (strain HI4320).